A 588-amino-acid polypeptide reads, in one-letter code: Pre-mRNA 3'-end-processing factor FIP1 (588 aa).

Residues 1–10 show a composition bias toward basic and acidic residues; the sequence is MSAGEVERLV. Disordered stretches follow at residues 1–81, 223–291, and 334–588; these read MSAG…EDDV, QGRT…ESPD, and VDNN…TPAE. The segment at 1–96 is sufficient for interaction with PAPOLA; the sequence is MSAGEVERLV…DIKTGAPQYG (96 aa). Positions 1–341 are necessary for stimulating PAPOLA activity; it reads MSAGEVERLV…TAVDNNFSKP (341 aa). Composition is skewed to acidic residues over residues 19 to 40 and 66 to 80; these read GDEE…EEEN and TEDD…DEDD. S70, S72, and S74 each carry phosphoserine. Residues 122–228 form a sufficient for interaction with CPSF4 region; that stretch reads KGVDLDAPGS…FKVQQGRTGN (107 aa). Over residues 259 to 270 the composition is skewed to low complexity; that stretch reads STSSQSQTSTAS. The segment covering 280–291 has biased composition (basic and acidic residues); that stretch reads WQDRYGRAESPD. S289 carries the post-translational modification Phosphoserine. A compositionally biased stretch (pro residues) spans 340–398; it reads KPPPFFPPGAPPTHLPPPPFLPPPPTVSTAPPLIPPPGIPITVPPPGFPPPPGAPPPSL. Y420 carries the phosphotyrosine modification. Residues 437-588 are sufficient for interaction with CPSF1 and CSTF3; sequence SLVDTSKQWD…QESTEATPAE (152 aa). Over residues 448–486 the composition is skewed to basic and acidic residues; the sequence is YARREKDRDRERDRDRERDRDRDRERERTRERERERDHS. The interval 451-484 is arg/Asp/Glu-rich domain; the sequence is REKDRDRERDRDRERDRDRDRERERTRERERERD. Residue S486 is modified to Phosphoserine. The residue at position 488 (T488) is a Phosphothreonine. 2 positions are modified to phosphoserine: S490 and S494. Basic and acidic residues predominate over residues 495-522; sequence DEERYRYREYAERGYERHRASREKEERH. Over residues 536–545 the composition is skewed to basic residues; the sequence is KSSRSNSRRR. Phosphoserine is present on S548. Residues 554–564 show a composition bias toward basic residues; the sequence is HRRHKHKKSKR.

Belongs to the FIP1 family. Component of the cleavage and polyadenylation specificity factor (CPSF) complex, composed of CPSF1, CPSF2, CPSF3, CPSF4 and FIP1L1. Found in a complex with CPSF1, FIP1L1 and PAPOLA. Interacts with CPSF1, CPSF4, CSTF2 and CSTF3. Interacts with AHCYL1 (when phosphorylated); the interaction is direct and associates AHCYL1 with the CPSF complex and RNA. Interacts with PAPOLA; the interaction seems to be increased by the interaction with AHCYL1. Interacts with NUDT21/CPSF5; this interaction occurs in a RNA sequence-specific manner. Interacts (preferentially via unphosphorylated form and Arg/Glu/Asp-rich domain) with CPSF6 (via Arg/Ser-rich domain); this interaction mediates, at least in part, the interaction between the CFIm and CPSF complexes and may be inhibited by CPSF6 hyper-phosphorylation. Interacts (preferentially via unphosphorylated form and Arg/Asp/Glu-rich domain) with CPSF7 (via Arg/Ser-rich domain); this interaction mediates, at least in part, the interaction between the CFIm and CPSF complexes and may be inhibited by CPSF7 hyper-phosphorylation.

The protein resides in the nucleus. Its function is as follows. Component of the cleavage and polyadenylation specificity factor (CPSF) complex that plays a key role in pre-mRNA 3'-end formation, recognizing the AAUAAA signal sequence and interacting with poly(A) polymerase and other factors to bring about cleavage and poly(A) addition. FIP1L1 contributes to poly(A) site recognition and stimulates poly(A) addition. Binds to U-rich RNA sequence elements surrounding the poly(A) site. May act to tether poly(A) polymerase to the CPSF complex. This Pongo abelii (Sumatran orangutan) protein is Pre-mRNA 3'-end-processing factor FIP1 (FIP1L1).